Consider the following 1493-residue polypeptide: Pleckstrin homology domain-containing family H member 2 (1493 aa).

Residues 20–175 (LESQLMKFRV…LQEVQGKKSS (156 aa)) adopt a coiled-coil conformation. Disordered stretches follow at residues 202–230 (SPPQVVKSEEMSKISSKEPEFTEGKDMEE), 245–335 (NNRG…SSSI), 363–439 (LNSP…LPPP), and 613–705 (SSSP…EPLE). A compositionally biased stretch (basic and acidic residues) spans 208-230 (KSEEMSKISSKEPEFTEGKDMEE). 2 stretches are compositionally biased toward polar residues: residues 245 to 260 (NNRGQRTLHQTPCGSE) and 267 to 281 (TSFATDGGISQNSGA). A compositionally biased stretch (basic and acidic residues) spans 374 to 388 (LSKKEQDSSSDELNK). Polar residues-rich tracts occupy residues 389–409 (KFQSQRLDYSSSSSEANTPSP), 421–432 (NSLSGKGTQLVP), and 676–698 (STDTEYSQPEQKLPKTCSSSSDN). PH domains are found at residues 703 to 797 (PLEK…NVLR) and 811 to 919 (KPTM…VAAG). A MyTH4 domain is found at 955–1110 (HSKEGIISPL…PSRMEILSTL (156 aa)). The FERM domain occupies 1121-1451 (FSIPVHFMNG…SYINNFHQQK (331 aa)). Residues 1474 to 1493 (MMGSQPLLSSSRPTKGPTLL) are disordered.

In terms of assembly, self-associates. Interacts with TGFB1I1. As to expression, kidney. Reduced expression in patients with focal segmental glomerulosclerosis.

Its subcellular location is the cytoplasm. It is found in the cytoskeleton. The protein localises to the cell membrane. It localises to the cell projection. The protein resides in the lamellipodium. In the kidney glomerulus may play a role in linking podocyte foot processes to the glomerular basement membrane. May be involved in stabilization of F-actin by attenuating its depolymerization. Can recruit TGFB1I1 from focal adhesions to podocyte lamellipodia. The polypeptide is Pleckstrin homology domain-containing family H member 2 (PLEKHH2) (Homo sapiens (Human)).